Consider the following 393-residue polypeptide: Glutamate 5-kinase (393 aa).

Residue lysine 17 participates in ATP binding. Serine 57, aspartate 144, and asparagine 156 together coordinate substrate. 176 to 177 (SD) is an ATP binding site. The region spanning 282–359 (AGSIAIDAGA…AEIAAILGYA (78 aa)) is the PUA domain. The tract at residues 374-393 (APSGARSEEGGNEKKGKLHA) is disordered. The span at 379–393 (RSEEGGNEKKGKLHA) shows a compositional bias: basic and acidic residues.

The protein belongs to the glutamate 5-kinase family.

The protein localises to the cytoplasm. It carries out the reaction L-glutamate + ATP = L-glutamyl 5-phosphate + ADP. It functions in the pathway amino-acid biosynthesis; L-proline biosynthesis; L-glutamate 5-semialdehyde from L-glutamate: step 1/2. In terms of biological role, catalyzes the transfer of a phosphate group to glutamate to form L-glutamate 5-phosphate. This is Glutamate 5-kinase from Sinorhizobium fredii (strain NBRC 101917 / NGR234).